We begin with the raw amino-acid sequence, 1073 residues long: ATP-dependent helicase/deoxyribonuclease subunit B (1073 aa).

This sequence belongs to the helicase family. AddB/RexB type 2 subfamily. Heterodimer of AddA and RexB. Mg(2+) serves as cofactor.

Its function is as follows. The heterodimer acts as both an ATP-dependent DNA helicase and an ATP-dependent, dual-direction single-stranded exonuclease. Recognizes the chi site generating a DNA molecule suitable for the initiation of homologous recombination. This subunit has 5' -&gt; 3' nuclease activity but not helicase activity. In Streptococcus equi subsp. zooepidemicus (strain H70), this protein is ATP-dependent helicase/deoxyribonuclease subunit B.